Here is a 662-residue protein sequence, read N- to C-terminus: Biosynthetic arginine decarboxylase (662 aa).

Position 126 is an N6-(pyridoxal phosphate)lysine (lysine 126). Residue 308 to 318 participates in substrate binding; it reads LNVGGGLGVDY.

It belongs to the Orn/Lys/Arg decarboxylase class-II family. SpeA subfamily. The cofactor is Mg(2+). Pyridoxal 5'-phosphate is required as a cofactor.

It carries out the reaction L-arginine + H(+) = agmatine + CO2. In terms of biological role, catalyzes the biosynthesis of agmatine from arginine. The protein is Biosynthetic arginine decarboxylase of Deinococcus radiodurans (strain ATCC 13939 / DSM 20539 / JCM 16871 / CCUG 27074 / LMG 4051 / NBRC 15346 / NCIMB 9279 / VKM B-1422 / R1).